The chain runs to 606 residues: DNA ligase (606 aa).

Glutamate 263 contributes to the ATP binding site. Residue lysine 265 is the N6-AMP-lysine intermediate of the active site. The ATP site is built by arginine 270, arginine 285, glutamate 315, phenylalanine 355, arginine 432, and lysine 438.

The protein belongs to the ATP-dependent DNA ligase family. Mg(2+) is required as a cofactor. The cofactor is Mn(2+).

It carries out the reaction ATP + (deoxyribonucleotide)n-3'-hydroxyl + 5'-phospho-(deoxyribonucleotide)m = (deoxyribonucleotide)n+m + AMP + diphosphate.. The catalysed reaction is ADP + (deoxyribonucleotide)n-3'-hydroxyl + 5'-phospho-(deoxyribonucleotide)m = (deoxyribonucleotide)n+m + AMP + phosphate.. The enzyme catalyses GTP + (deoxyribonucleotide)n-3'-hydroxyl + 5'-phospho-(deoxyribonucleotide)m = (deoxyribonucleotide)n+m + GMP + diphosphate.. DNA ligase that seals nicks in double-stranded DNA during DNA replication, DNA recombination and DNA repair. Can use ATP, ADP and GTP, but not CTP, TTP or NAD(+). The chain is DNA ligase from Sulfophobococcus zilligii.